A 356-amino-acid chain; its full sequence is Chaperone protein DnaJ (356 aa).

Positions 5-69 constitute a J domain; sequence DYYQILGVSK…ERRKEYDRIL (65 aa). The segment at 121-197 adopts a CR-type zinc-finger fold; it reads GCEKDIEYER…CSGRGRVAMH (77 aa). Residues Cys134, Cys137, Cys151, Cys154, Cys171, Cys174, Cys185, and Cys188 each contribute to the Zn(2+) site. CXXCXGXG motif repeat units follow at residues 134-141, 151-158, 171-178, and 185-192; these read CPTCEGKG, CHACEGTG, CSVCKGRG, and CPACSGRG.

Belongs to the DnaJ family. In terms of assembly, homodimer. Zn(2+) serves as cofactor.

Its subcellular location is the cytoplasm. Participates actively in the response to hyperosmotic and heat shock by preventing the aggregation of stress-denatured proteins and by disaggregating proteins, also in an autonomous, DnaK-independent fashion. Unfolded proteins bind initially to DnaJ; upon interaction with the DnaJ-bound protein, DnaK hydrolyzes its bound ATP, resulting in the formation of a stable complex. GrpE releases ADP from DnaK; ATP binding to DnaK triggers the release of the substrate protein, thus completing the reaction cycle. Several rounds of ATP-dependent interactions between DnaJ, DnaK and GrpE are required for fully efficient folding. Also involved, together with DnaK and GrpE, in the DNA replication of plasmids through activation of initiation proteins. This chain is Chaperone protein DnaJ, found in Hydrogenobacter thermophilus (strain DSM 6534 / IAM 12695 / TK-6).